The sequence spans 71 residues: MADDQSLSARIEALEMRLTYQDETIETLNQAVTAQWQQIDALTRQIAALSDRLAQAETSVAAPANERPPHY.

Belongs to the SlyX family.

In Rhodopseudomonas palustris (strain HaA2), this protein is Protein SlyX homolog.